The primary structure comprises 171 residues: Protein phosphatase 1 regulatory subunit 1A (171 aa).

Methionine 1 carries the N-acetylmethionine modification. Positions 1–171 (MEPDNSPRKI…PLDSQGASLV (171 aa)) are disordered. The tract at residues 9 to 12 (KIQF) is essential for activity. Residues 19 to 29 (PHLDPEAAEQI) show a composition bias toward basic and acidic residues. Threonine 35 bears the Phosphothreonine mark. Residues 42-54 (TSDQSSPEIDEDR) form an essential for activity region. Residues serine 43, serine 46, serine 47, and serine 67 each carry the phosphoserine modification. Residues 122 to 146 (GSASRPDTPGTAQKSAESNPKTQEQ) are compositionally biased toward polar residues. Residues 143–171 (TQEQCGVEPRTEDSSAHMLPLDSQGASLV) are interaction with PPP1R15A.

It belongs to the protein phosphatase inhibitor 1 family. Interacts with PPP1R15A. In terms of processing, phosphorylation of Thr-35 is required for activity.

Inhibitor of protein-phosphatase 1. This protein may be important in hormonal control of glycogen metabolism. Hormones that elevate intracellular cAMP increase I-1 activity in many tissues. I-1 activation may impose cAMP control over proteins that are not directly phosphorylated by PKA. Following a rise in intracellular calcium, I-1 is inactivated by calcineurin (or PP2B). Does not inhibit type-2 phosphatases. The protein is Protein phosphatase 1 regulatory subunit 1A (Ppp1r1a) of Mus musculus (Mouse).